The following is a 1365-amino-acid chain: Histone-lysine N-methyltransferase NSD2 (1365 aa).

Thr-110 and Thr-114 each carry phosphothreonine. The residue at position 121 (Ser-121) is a Phosphoserine. Residues 149–170 are disordered; the sequence is ADVSQSEENGQKPENKARRNRK. Position 172 is a phosphoserine (Ser-172). Positions 222–286 constitute a PWWP 1 domain; the sequence is VGDLVWSKVS…FEKSLVAFEG (65 aa). Ser-376 is subject to Phosphoserine. 2 disordered regions span residues 376 to 455 and 516 to 658; these read SSGV…RKGD and EDSG…SKKS. Thr-422 carries the phosphothreonine modification. The segment at residues 453-521 is a DNA-binding region (HMG box); it reads KGDAASQFLV…VQAEEDSGNV (69 aa). At Thr-544 the chain carries Phosphothreonine. Residues 552 to 567 are compositionally biased toward basic and acidic residues; it reads DKHSLRKRDTITDKTA. Polar residues predominate over residues 580-590; the sequence is SLKSQAATKNL. A compositionally biased stretch (low complexity) spans 606 to 622; it reads AASSALGFSKSSSPSAS. Ser-614 is modified (phosphoserine). Positions 632-648 are enriched in acidic residues; it reads PGDEPSESPYESADETQ. 3 consecutive PHD-type zinc fingers follow at residues 667 to 713, 714 to 770, and 831 to 875; these read EYVC…CASG, IHSC…CHAS, and VSWC…CRAG. A PWWP 2 domain is found at 880 to 942; sequence FQDIIWVKLG…QARVFPYMEG (63 aa). The AWS domain occupies 1011-1061; that stretch reads SEIPKCNCKPTDENPCGFDSECLNRMLMFECHPQVCPAGEFCQNQCFTKRQ. Residues Cys-1016, Cys-1018, Cys-1026, Cys-1032, Cys-1041, Cys-1046, and Cys-1052 each coordinate Zn(2+). The region spanning 1063–1180 is the SET domain; it reads PETKIIKTDG…AGTELTFNYN (118 aa). S-adenosyl-L-methionine is bound by residues Trp-1075, 1115 to 1118, and 1141 to 1142; these read THFY and NH. Cys-1144 contacts Zn(2+). Asn-1186 is a binding site for S-adenosyl-L-methionine. The Post-SET domain occupies 1187–1203; that stretch reads EKTVCRCGASNCSGFLG. Residue Cys-1191 participates in Zn(2+) binding. Arg-1192 is a binding site for S-adenosyl-L-methionine. Positions 1193 and 1198 each coordinate Zn(2+). The tract at residues 1207 to 1232 is disordered; that stretch reads KTSTTLSSEEKGKKTKKKTRRRRAKG. A compositionally biased stretch (basic residues) spans 1219–1230; that stretch reads KKTKKKTRRRRA. The PHD-type 4; atypical zinc-finger motif lies at 1239–1286; it reads EDECFRCGDGGQLVLCDRKFCTKAYHLSCLGLGKRPFGKWECPWHHCD. The segment at 1333–1365 is disordered; sequence VRSTKTEKPPPEPGKPKGKRRRRRGWRRVTEGK. A compositionally biased stretch (basic residues) spans 1348–1359; that stretch reads PKGKRRRRRGWR.

It belongs to the class V-like SAM-binding methyltransferase superfamily. Histone-lysine methyltransferase family. SET2 subfamily. Interacts with HDAC1. Interacts (via PHD-type zinc fingers 1, 2 and 3) with SALL1. Interacts (via PHD-type 1, 2 and 3) with SALL4. Interacts with NANOG. Interacts with OGT. Interacts (via HMG box) with NKX2-5. In terms of tissue distribution, widely expressed. Predominantly expressed in thymus and testis.

It localises to the nucleus. Its subcellular location is the chromosome. The protein resides in the cytoplasm. It is found in the nucleolus. The catalysed reaction is L-lysyl(36)-[histone H3] + S-adenosyl-L-methionine = N(6)-methyl-L-lysyl(36)-[histone H3] + S-adenosyl-L-homocysteine + H(+). It carries out the reaction L-lysyl(36)-[histone H3] + 2 S-adenosyl-L-methionine = N(6),N(6)-dimethyl-L-lysyl(36)-[histone H3] + 2 S-adenosyl-L-homocysteine + 2 H(+). Its function is as follows. Histone methyltransferase which specifically dimethylates nucleosomal histone H3 at 'Lys-36' (H3K36me2). Also monomethylates nucleosomal histone H3 at 'Lys-36' (H3K36me) in vitro. Does not trimethylate nucleosomal histone H3 at 'Lys-36' (H3K36me3). However, specifically trimethylates histone H3 at 'Lys-36' (H3K36me3) at euchromatic regions in embryonic stem (ES) cells. By methylating histone H3 at 'Lys-36', involved in the regulation of gene transcription during various biological processes. In ES cells, associates with developmental transcription factors such as SALL1 and represses inappropriate gene transcription mediated by histone deacetylation. During heart development, associates with transcription factor NKX2-5 to repress transcription of NKX2-5 target genes. Plays an essential role in adipogenesis, by regulating expression of genes involved in pre-adipocyte differentiation. During T-cell receptor (TCR) and CD28-mediated T-cell activation, promotes the transcription of transcription factor BCL6 which is required for follicular helper T (Tfh) cell differentiation. During B-cell development, required for the generation of the B1 lineage. During B2 cell activation, may contribute to the control of isotype class switch recombination (CRS), splenic germinal center formation, and the humoral immune response. Plays a role in class switch recombination of the immunoglobulin heavy chain (IgH) locus during B-cell activation. By regulating the methylation of histone H3 at 'Lys-36' and histone H4 at 'Lys-20' at the IgH locus, involved in TP53BP1 recruitment to the IgH switch region and promotes the transcription of IgA. Functionally, histone methyltransferase which specifically dimethylates nucleosomal histone H3 at 'Lys-36' (H3K36me2). Histone methyltransferase which specifically dimethylates nucleosomal histone H3 at 'Lys-36' (H3K36me2). Methylation of histone H3 at 'Lys-27' is controversial. Mono-, di- or tri-methylates histone H3 at 'Lys-27' (H3K27me, H3K27me2 and H3K27me3). Does not methylate histone H3 at 'Lys-27'. May act as a transcription regulator that binds DNA and suppresses IL5 transcription through HDAC recruitment. The chain is Histone-lysine N-methyltransferase NSD2 from Homo sapiens (Human).